Consider the following 171-residue polypeptide: Co-chaperone protein HscB (171 aa).

Residues 2 to 74 form the J domain; that stretch reads DYFTFFGLPA…LMRAEYLLSL (73 aa).

The protein belongs to the HscB family. As to quaternary structure, interacts with HscA and stimulates its ATPase activity. Interacts with IscU.

Functionally, co-chaperone involved in the maturation of iron-sulfur cluster-containing proteins. Seems to help targeting proteins to be folded toward HscA. This chain is Co-chaperone protein HscB, found in Shigella sonnei (strain Ss046).